Consider the following 138-residue polypeptide: MRTLWLMAVLLVGVEGGVIELTKMIVQEMGKNALTSYSLYGCNCGPGGRRKPMDATDSCCYVHKCCYKKLTDCDPIKDRYSYSWVNKAIVCGEKNPHLKELCECDKAVAICFRENMDTYDKKKKINLKLFCKKTSEKC.

Positions 1-16 are cleaved as a signal peptide; it reads MRTLWLMAVLLVGVEG. Intrachain disulfides connect cysteine 42-cysteine 131, cysteine 44-cysteine 60, cysteine 59-cysteine 111, cysteine 65-cysteine 138, cysteine 66-cysteine 104, and cysteine 91-cysteine 102. An important for membrane-damaging activities in eukaryotes and bacteria; heparin-binding region spans residues 121-133; that stretch reads KKKKINLKLFCKK.

The protein belongs to the phospholipase A2 family. Group II subfamily. K49 sub-subfamily. In terms of tissue distribution, expressed by the venom gland.

The protein localises to the secreted. In terms of biological role, snake venom phospholipase A2 homolog that lacks enzymatic activity. Is myotoxic and displays edema-inducing activities. A model of myotoxic mechanism has been proposed: an apo Lys49-PLA2 is activated by the entrance of a hydrophobic molecule (e.g. fatty acid) at the hydrophobic channel of the protein leading to a reorientation of a monomer. This reorientation causes a transition between 'inactive' to 'active' states, causing alignment of C-terminal and membrane-docking sites (MDoS) side-by-side and putting the membrane-disruption sites (MDiS) in the same plane, exposed to solvent and in a symmetric position for both monomers. The MDoS region stabilizes the toxin on membrane by the interaction of charged residues with phospholipid head groups. Subsequently, the MDiS region destabilizes the membrane with penetration of hydrophobic residues. This insertion causes a disorganization of the membrane, allowing an uncontrolled influx of ions (i.e. calcium and sodium), and eventually triggering irreversible intracellular alterations and cell death. The protein is Basic phospholipase A2 homolog 7 of Craspedocephalus gramineus (Bamboo pit viper).